The primary structure comprises 318 residues: Malonyl CoA-acyl carrier protein transacylase, mitochondrial (318 aa).

It belongs to the FabD family.

Its subcellular location is the mitochondrion. The catalysed reaction is holo-[ACP] + malonyl-CoA = malonyl-[ACP] + CoA. Its pathway is lipid metabolism; fatty acid biosynthesis. Involved in biosynthesis of fatty acids in mitochondria. This Schizosaccharomyces pombe (strain 972 / ATCC 24843) (Fission yeast) protein is Malonyl CoA-acyl carrier protein transacylase, mitochondrial (mct1).